Reading from the N-terminus, the 194-residue chain is dTTP/UTP pyrophosphatase (194 aa).

Aspartate 73 functions as the Proton acceptor in the catalytic mechanism.

Belongs to the Maf family. YhdE subfamily. Requires a divalent metal cation as cofactor.

The protein resides in the cytoplasm. It carries out the reaction dTTP + H2O = dTMP + diphosphate + H(+). The catalysed reaction is UTP + H2O = UMP + diphosphate + H(+). Functionally, nucleoside triphosphate pyrophosphatase that hydrolyzes dTTP and UTP. May have a dual role in cell division arrest and in preventing the incorporation of modified nucleotides into cellular nucleic acids. The chain is dTTP/UTP pyrophosphatase from Clostridium botulinum (strain Loch Maree / Type A3).